The following is a 274-amino-acid chain: Large ribosomal subunit protein uL2 (274 aa).

2 disordered regions span residues 1-23 (MAIKIYRPTSPGRRHHSVSSFEE) and 222-242 (GSAMSPNNHPHGGGECRSPIG).

This sequence belongs to the universal ribosomal protein uL2 family. Part of the 50S ribosomal subunit. Forms a bridge to the 30S subunit in the 70S ribosome.

One of the primary rRNA binding proteins. Required for association of the 30S and 50S subunits to form the 70S ribosome, for tRNA binding and peptide bond formation. It has been suggested to have peptidyltransferase activity; this is somewhat controversial. Makes several contacts with the 16S rRNA in the 70S ribosome. This Dehalococcoides mccartyi (strain ATCC BAA-2266 / KCTC 15142 / 195) (Dehalococcoides ethenogenes (strain 195)) protein is Large ribosomal subunit protein uL2.